A 271-amino-acid polypeptide reads, in one-letter code: Glutamate racemase (271 aa).

Substrate contacts are provided by residues 13 to 14 and 45 to 46; these read DS and YG. Residue Cys77 is the Proton donor/acceptor of the active site. A substrate-binding site is contributed by 78–79; that stretch reads NT. Residue Cys192 is the Proton donor/acceptor of the active site. Substrate is bound at residue 193–194; sequence TH.

This sequence belongs to the aspartate/glutamate racemases family.

It carries out the reaction L-glutamate = D-glutamate. Its pathway is cell wall biogenesis; peptidoglycan biosynthesis. In terms of biological role, provides the (R)-glutamate required for cell wall biosynthesis. This is Glutamate racemase from Sinorhizobium medicae (strain WSM419) (Ensifer medicae).